We begin with the raw amino-acid sequence, 406 residues long: Endo-xylogalacturonan hydrolase A (406 aa).

An N-terminal signal peptide occupies residues 1-18 (MALYRNLYLLASLGLSSA). PbH1 repeat units follow at residues 183-213 (ATNVVFSNLKMDANSKSDNPPKNTDGFDIGE), 214-257 (STYV…SVGS), 266-289 (VKNIYVTGATMINSTKAAGIKTYP), 299-320 (VSNVTFNDFTVDNSDYAFQIQS), and 333-375 (PGNA…SISG). The active-site Proton donor is the D228. Residue H251 is part of the active site. N278 and N301 each carry an N-linked (GlcNAc...) asparagine glycan.

It belongs to the glycosyl hydrolase 28 family.

Its subcellular location is the secreted. Functionally, pectinolytic enzyme involved in the degradation of xylogalacturonan (xga), a galacturonan backbone heavily substituted with xylose, and which is one important component of the hairy regions of pectin. Activity requires a galacturonic acid backbone substituted with xylose. The protein is Endo-xylogalacturonan hydrolase A (xghA) of Aspergillus tubingensis.